The chain runs to 363 residues: Protein-arginine kinase (363 aa).

The 231-residue stretch at 24 to 254 (IVLSSRIRLA…AQLIEQERSA (231 aa)) folds into the Phosphagen kinase C-terminal domain. Residues 27-31 (SSRIR), His-92, Arg-125, 176-180 (RASVM), and 207-212 (RGIYGE) contribute to the ATP site. The short motif at 337-342 (RDIRRA) is the RDXXRA motif of the pArg binding pocket involved in allosteric regulation element.

This sequence belongs to the ATP:guanido phosphotransferase family.

The catalysed reaction is L-arginyl-[protein] + ATP = N(omega)-phospho-L-arginyl-[protein] + ADP + H(+). With respect to regulation, appears to be allosterically activated by the binding of pArg-containing polypeptides to the pArg-binding pocket localized in the C-terminal domain of McsB. Functionally, catalyzes the specific phosphorylation of arginine residues in a large number of proteins. Is part of the bacterial stress response system. Protein arginine phosphorylation has a physiologically important role and is involved in the regulation of many critical cellular processes, such as protein homeostasis, motility, competence, and stringent and stress responses, by regulating gene expression and protein activity. This Bacillus licheniformis (strain ATCC 14580 / DSM 13 / JCM 2505 / CCUG 7422 / NBRC 12200 / NCIMB 9375 / NCTC 10341 / NRRL NRS-1264 / Gibson 46) protein is Protein-arginine kinase.